Consider the following 265-residue polypeptide: Keratinocyte-associated transmembrane protein 2 (265 aa).

Positions 1–49 (MAAAALKRMRGPAQAKLLPGSAIQALVGLARPLVLALLLVSAALSSVVS) are cleaved as a signal peptide. Over 50 to 196 (RTDSPSPTVL…MPSSNIEEED (147 aa)) the chain is Extracellular. A compositionally biased stretch (polar residues) spans 72-96 (THENQTKPSISQISTTLPPTMSTEK). 2 disordered regions span residues 72–123 (THEN…EDPS) and 135–168 (SPST…SDDT). N-linked (GlcNAc...) asparagine glycosylation is present at asparagine 75. Positions 114–123 (EEADNNEDPS) are enriched in acidic residues. Residues 197 to 217 (SHFFFHLIIFAFCIAVVYITY) form a helical membrane-spanning segment. The Cytoplasmic segment spans residues 218-265 (HNKRKIFLLVQSRKWRDGLCSKTVEYHRLDQNVNEAMPSLKITNDYTF). Residues serine 229 and serine 256 each carry the phosphoserine modification.

Its subcellular location is the membrane. In Pongo abelii (Sumatran orangutan), this protein is Keratinocyte-associated transmembrane protein 2 (KCT2).